Consider the following 316-residue polypeptide: Apolipoprotein E (316 aa).

An N-terminal signal peptide occupies residues 1–18 (MKVLWVALVITLLAGCQA). 8 consecutive repeat copies span residues 79–100 (VLMDETMKEVKAYREELEGQLG), 101–122 (PIAQETQARVSKELQAAQARLA), 123–144 (SDMEDVRSRVAQYRSEVQAMMG), 145–166 (QTTDELRGRLASHLRKLRKRLL), 167–188 (RDAEDLQKRLAVYRAGALEGSE), 189–210 (RSVSAIRERLGPLVEQGRVRAA), 211–232 (TVGTLASQTLRERAEAWHQKLR), and 233–254 (GRMEEMGTQARDHLEEMREQLE). Residues 79–254 (VLMDETMKEV…HLEEMREQLE (176 aa)) are 8 X 22 AA approximate tandem repeats. Residue methionine 142 is modified to Methionine sulfoxide. The LDL and other lipoprotein receptors binding stretch occupies residues 157–167 (HLRKLRKRLLR). Position 161–164 (161–164 (LRKR)) interacts with heparin. A lipid-binding and lipoprotein association region spans residues 209–289 (AATVGTLASQ…SWFEPLVEDM (81 aa)). 228–235 (HQKLRGRM) contributes to the heparin binding site. The homooligomerization stretch occupies residues 265-316 (SQMRLQAEAFQARLKSWFEPLVEDMQRQWAGLVEKVQLAMATSPTSAPIENS). Residues 277 to 289 (RLKSWFEPLVEDM) form a specificity for association with VLDL region.

It belongs to the apolipoprotein A1/A4/E family. In terms of assembly, homotetramer. May interact with ABCA1; functionally associated with ABCA1 in the biogenesis of HDLs. May interact with APP/A4 amyloid-beta peptide; the interaction is extremely stable in vitro but its physiological significance is unclear. May interact with MAPT. May interact with MAP2. In the cerebrospinal fluid, interacts with secreted SORL1. Interacts with PMEL; this allows the loading of PMEL luminal fragment on ILVs to induce fibril nucleation. Post-translationally, APOE exists as multiple glycosylated and sialylated glycoforms within cells and in plasma. The extent of glycosylation and sialylation are tissue and context specific. Glycated in plasma VLDL. In terms of processing, phosphorylated by FAM20C in the extracellular medium.

It is found in the secreted. The protein localises to the extracellular space. It localises to the extracellular matrix. Its subcellular location is the extracellular vesicle. The protein resides in the endosome. It is found in the multivesicular body. Functionally, APOE is an apolipoprotein, a protein associating with lipid particles, that mainly functions in lipoprotein-mediated lipid transport between organs via the plasma and interstitial fluids. APOE is a core component of plasma lipoproteins and is involved in their production, conversion and clearance. Apolipoproteins are amphipathic molecules that interact both with lipids of the lipoprotein particle core and the aqueous environment of the plasma. As such, APOE associates with chylomicrons, chylomicron remnants, very low density lipoproteins (VLDL) and intermediate density lipoproteins (IDL) but shows a preferential binding to high-density lipoproteins (HDL). It also binds a wide range of cellular receptors including the LDL receptor/LDLR and the very low-density lipoprotein receptor/VLDLR that mediate the cellular uptake of the APOE-containing lipoprotein particles. Finally, APOE also has a heparin-binding activity and binds heparan-sulfate proteoglycans on the surface of cells, a property that supports the capture and the receptor-mediated uptake of APOE-containing lipoproteins by cells. The sequence is that of Apolipoprotein E (APOE) from Orcinus orca (Killer whale).